The primary structure comprises 71 residues: Sec-independent protein translocase protein TatA (71 aa).

A helical membrane pass occupies residues 1–21 (MGSFSMWHWLIVLAIVLLLFG). The interval 40–71 (KKGMSDDDTAPDGTPKPADQSKTVDHRADDHK) is disordered. The span at 61 to 71 (KTVDHRADDHK) shows a compositional bias: basic and acidic residues.

Belongs to the TatA/E family. In terms of assembly, the Tat system comprises two distinct complexes: a TatABC complex, containing multiple copies of TatA, TatB and TatC subunits, and a separate TatA complex, containing only TatA subunits. Substrates initially bind to the TatABC complex, which probably triggers association of the separate TatA complex to form the active translocon.

It localises to the cell inner membrane. In terms of biological role, part of the twin-arginine translocation (Tat) system that transports large folded proteins containing a characteristic twin-arginine motif in their signal peptide across membranes. TatA could form the protein-conducting channel of the Tat system. The sequence is that of Sec-independent protein translocase protein TatA from Allorhizobium ampelinum (strain ATCC BAA-846 / DSM 112012 / S4) (Agrobacterium vitis (strain S4)).